An 840-amino-acid chain; its full sequence is Probable alpha-glucuronidase A (840 aa).

An N-terminal signal peptide occupies residues 1 to 19 (MWSGIPIFALLSSIGIAAA). N-linked (GlcNAc...) asparagine glycans are attached at residues Asn-50, Asn-149, Asn-222, Asn-262, Asn-279, Asn-310, Asn-465, Asn-527, Asn-576, Asn-610, Asn-682, Asn-723, and Asn-732.

It belongs to the glycosyl hydrolase 67 family.

The protein resides in the secreted. It carries out the reaction an alpha-D-glucuronoside + H2O = D-glucuronate + an alcohol. In terms of biological role, alpha-glucuronidase involved in the hydrolysis of xylan, a major structural heterogeneous polysaccharide found in plant biomass representing the second most abundant polysaccharide in the biosphere, after cellulose. Releases 4-O-methylglucuronic acid from xylan. The protein is Probable alpha-glucuronidase A (aguA) of Aspergillus fumigatus (strain ATCC MYA-4609 / CBS 101355 / FGSC A1100 / Af293) (Neosartorya fumigata).